The sequence spans 86 residues: Exodeoxyribonuclease 7 small subunit (86 aa).

It belongs to the XseB family. Heterooligomer composed of large and small subunits.

It is found in the cytoplasm. It carries out the reaction Exonucleolytic cleavage in either 5'- to 3'- or 3'- to 5'-direction to yield nucleoside 5'-phosphates.. Bidirectionally degrades single-stranded DNA into large acid-insoluble oligonucleotides, which are then degraded further into small acid-soluble oligonucleotides. The chain is Exodeoxyribonuclease 7 small subunit from Xanthomonas oryzae pv. oryzae (strain MAFF 311018).